The primary structure comprises 379 residues: Presenilin-associated rhomboid-like protein, mitochondrial (379 aa).

The N-terminal 52 residues, Met1–Gly52, are a transit peptide targeting the mitochondrion. The Mitochondrial matrix portion of the chain corresponds to Phe53–Pro101. Ser65 carries the phosphoserine modification. Phosphothreonine is present on Thr69. Ser70 bears the Phosphoserine mark. A helical membrane pass occupies residues Leu102 to Tyr121. At Glu122 to Arg167 the chain is on the mitochondrial intermembrane side. A helical membrane pass occupies residues Thr168–Ser187. The Mitochondrial matrix segment spans residues Leu188 to Ser207. A helical transmembrane segment spans residues Pro208 to Trp230. The Mitochondrial intermembrane portion of the chain corresponds to Ser231–Gln244. A helical membrane pass occupies residues Phe245–Val262. Residues Gly263–Pro272 lie on the Mitochondrial matrix side of the membrane. A helical transmembrane segment spans residues Ser273–Thr289. The active-site Nucleophile is the Ser277. Over Lys290–Arg295 the chain is Mitochondrial intermembrane. The helical transmembrane segment at Leu296–Met318 threads the bilayer. Residues Asp319–His332 are Mitochondrial matrix-facing. The helical transmembrane segment at Ala333–Trp354 threads the bilayer. The active site involves His335. Over Lys355–Lys379 the chain is Mitochondrial intermembrane.

Belongs to the peptidase S54 family. In terms of assembly, interacts with PSEN1 and PSEN2. Binds OPA1. Post-translationally, P-beta is proteolytically processed (beta-cleavage) in a PARL-dependent manner. The cleavage is inhibited when residues Ser-65, Thr-69 and Ser-70 are all phosphorylated.

Its subcellular location is the mitochondrion inner membrane. It localises to the nucleus. It carries out the reaction Cleaves type-1 transmembrane domains using a catalytic dyad composed of serine and histidine that are contributed by different transmembrane domains.. Functionally, required for the control of apoptosis during postnatal growth. Essential for proteolytic processing of an antiapoptotic form of OPA1 which prevents the release of mitochondrial cytochrome c in response to intrinsic apoptotic signals. Required for the maturation of PINK1 into its 52kDa mature form after its cleavage by mitochondrial-processing peptidase (MPP). Promotes cleavage of serine/threonine-protein phosphatase PGAM5 in damaged mitochondria in response to loss of mitochondrial membrane potential. Mediates differential cleavage of PINK1 and PGAM5 depending on the health status of mitochondria, disassociating from PINK1 and associating with PGAM5 in response to mitochondrial membrane potential loss. Required for processing of CLPB into a form with higher protein disaggregase activity by removing an autoinhibitory N-terminal peptide. Promotes processing of DIABLO/SMAC in the mitochondrion which is required for DIABLO apoptotic activity. Also required for cleavage of STARD7 and TTC19. Promotes changes in mitochondria morphology regulated by phosphorylation of P-beta domain. This is Presenilin-associated rhomboid-like protein, mitochondrial (PARL) from Homo sapiens (Human).